The following is a 282-amino-acid chain: MATYLIGDVHGCYDELIALLQQVEFTPDTDTLWLTGDLVARGPGSLDVLRYVKSLGNSVRLVLGNHDLHLLAVFAGISRNKPKDRLTPLLEAPDADELLNWLRRQPLLLVDEEKKLIMAHAGITPQWDLQTAKECARDVEAVLSSDSYPFFLDAMYGDMPNNWSPELSGLARLRFITNAFTRMRYCFPNGQLDMYSKASPENAPAPLKPWFAIPGPVSEAYSIAFGHWASLEGKGTPEGIYALDTGCCWGGELTCLRWEDKQYFVQPSNRQMDMGEGEAVNA.

This sequence belongs to the Ap4A hydrolase family.

It carries out the reaction P(1),P(4)-bis(5'-adenosyl) tetraphosphate + H2O = 2 ADP + 2 H(+). Functionally, hydrolyzes diadenosine 5',5'''-P1,P4-tetraphosphate to yield ADP. The protein is Bis(5'-nucleosyl)-tetraphosphatase, symmetrical of Salmonella paratyphi C (strain RKS4594).